Reading from the N-terminus, the 223-residue chain is Putative synaptogyrin-2 like protein (223 aa).

The residue at position 1 (Met1) is an N-acetylmethionine. A Phosphoserine modification is found at Ser3. In terms of domain architecture, MARVEL spans 20–170 (FLTQPQVVAR…LASLTYQRYK (151 aa)). Transmembrane regions (helical) follow at residues 26–46 (VVAR…IYGE), 71–91 (GSAI…DAYF), 104–124 (VIGD…GFCF), and 146–166 (AAIT…SLTY). Residues 197 to 223 (ASVDNYQQPPFTQNAETTEGYQPPPVY) are disordered. Residues 200–216 (DNYQQPPFTQNAETTEG) show a composition bias toward polar residues.

Belongs to the synaptogyrin family.

The protein localises to the membrane. The sequence is that of Putative synaptogyrin-2 like protein from Homo sapiens (Human).